A 143-amino-acid chain; its full sequence is Large ribosomal subunit protein uL11 (143 aa).

It belongs to the universal ribosomal protein uL11 family. As to quaternary structure, part of the ribosomal stalk of the 50S ribosomal subunit. Interacts with L10 and the large rRNA to form the base of the stalk. L10 forms an elongated spine to which L12 dimers bind in a sequential fashion forming a multimeric L10(L12)X complex. In terms of processing, one or more lysine residues are methylated.

Forms part of the ribosomal stalk which helps the ribosome interact with GTP-bound translation factors. This Pseudomonas savastanoi pv. phaseolicola (strain 1448A / Race 6) (Pseudomonas syringae pv. phaseolicola (strain 1448A / Race 6)) protein is Large ribosomal subunit protein uL11.